A 347-amino-acid polypeptide reads, in one-letter code: Pre-B-cell leukemia transcription factor 1 (347 aa).

The segment at methionine 1–valine 37 is disordered. The 195-residue stretch at glycine 38–aspartate 232 folds into the PBC domain. The segment at aspartate 45 to glycine 124 is PBC-A. The interval alanine 127–aspartate 232 is PBC-B. The segment at residues alanine 233 to isoleucine 295 is a DNA-binding region (homeobox; TALE-type). Residues valine 318 to serine 331 show a composition bias toward polar residues. Positions valine 318 to glutamine 347 are disordered.

It belongs to the TALE/PBX homeobox family. As to quaternary structure, forms a heterodimer with isoform 2 of meis1; the interaction is necessary for neural fate induction. As to expression, shows broad, weak expression from blastula through gastrula stages. At stage 14/15, expressed in a broad arc that gives rise to the forebrain and eyes. More intensely expressed in the lateral neural folds (presumptive neural crest) and as horizontal stripes in the posterior neural plate that give rise to the hindbrain. As development proceeds, expression progresses posteriorly along the neural folds and at stage 21, expression is pronounced in the prospective hindbrain and in migratory neural crest cells. At later stages (stage 26), expression becomes intense within the dorsal portion of the forebrain, and in the optic cup, caudal branchial arch, peripheral to the pronephric anlage, and in the dorsal anterior half of the spinal cord. Expression remains robust in the hindbrain but gradually becomes more restricted. At stage 28, expressed in the dorsal lateral portion of the neural tube and in the somatic layer of the lateral plate mesoderm that surrounds the pronephric anlage.

Its subcellular location is the nucleus. Functionally, acts as a transcriptional activator in complex with isoform 2 of meis1, to induce posterior neural and neural crest gene expression, and thereby specify hindbrain and neural crest cell fate. Binds to a highly conserved region in the promoter of the neural crest gene zic3. Required for the nuclear transport or retention of isoform 2 of meis1. The sequence is that of Pre-B-cell leukemia transcription factor 1 (pbx1) from Xenopus laevis (African clawed frog).